Here is a 215-residue protein sequence, read N- to C-terminus: Small ribosomal subunit protein uS5 (215 aa).

Residues 1 to 62 (MTDSSPQSNP…QERDSEWQER (62 aa)) form a disordered region. A compositionally biased stretch (low complexity) spans 9–28 (NPNAVPGAADVPAAAEGQQQ). Basic and acidic residues predominate over residues 29-61 (EQRRGGGRGERGDRRGGRRGDRRNQERDSEWQE). The 64-residue stretch at 59–122 (WQERVVQIRR…ADGKKHLVKV (64 aa)) folds into the S5 DRBM domain.

It belongs to the universal ribosomal protein uS5 family. In terms of assembly, part of the 30S ribosomal subunit. Contacts proteins S4 and S8.

Its function is as follows. With S4 and S12 plays an important role in translational accuracy. In terms of biological role, located at the back of the 30S subunit body where it stabilizes the conformation of the head with respect to the body. This is Small ribosomal subunit protein uS5 from Parasynechococcus marenigrum (strain WH8102).